Here is a 312-residue protein sequence, read N- to C-terminus: Glyoxylate/hydroxypyruvate reductase A (312 aa).

The active site involves Arg227. His275 acts as the Proton donor in catalysis.

Belongs to the D-isomer specific 2-hydroxyacid dehydrogenase family. GhrA subfamily.

It is found in the cytoplasm. The catalysed reaction is glycolate + NADP(+) = glyoxylate + NADPH + H(+). It catalyses the reaction (R)-glycerate + NAD(+) = 3-hydroxypyruvate + NADH + H(+). It carries out the reaction (R)-glycerate + NADP(+) = 3-hydroxypyruvate + NADPH + H(+). In terms of biological role, catalyzes the NADPH-dependent reduction of glyoxylate and hydroxypyruvate into glycolate and glycerate, respectively. The chain is Glyoxylate/hydroxypyruvate reductase A from Klebsiella pneumoniae subsp. pneumoniae (strain ATCC 700721 / MGH 78578).